The following is an 801-amino-acid chain: Phosphatidylinositol 4-phosphate 5-kinase 1 (801 aa).

Residues Met-1–Gly-21 form the signal peptide. 8 MORN repeats span residues Tyr-41–Leu-63, Tyr-64–Ser-86, Tyr-87–Val-109, Tyr-110–Thr-132, Tyr-133–Val-155, Tyr-156–Thr-178, Asn-182–Cys-201, and Tyr-202–Lys-223. In terms of domain architecture, PIPK spans Gly-366 to Phe-797.

Expressed in young seedlings, shoot and seeds, and at lower level in roots, stem and leaf.

It carries out the reaction a 1,2-diacyl-sn-glycero-3-phospho-(1D-myo-inositol 4-phosphate) + ATP = a 1,2-diacyl-sn-glycero-3-phospho-(1D-myo-inositol-4,5-bisphosphate) + ADP + H(+). Involved in flowering. May suppress floral initiation by modifying the expression of genes related to floral induction. This Oryza sativa subsp. japonica (Rice) protein is Phosphatidylinositol 4-phosphate 5-kinase 1 (PIPK1).